The chain runs to 80 residues: RNA-binding protein KhpA (80 aa).

The KH domain maps to 33–80; it reads GRTVEVHVHPDDLGKVIGRGGRTATALRTLVAGIGGRGIRVDVVDTDQ.

This sequence belongs to the KhpA RNA-binding protein family.

The protein resides in the cytoplasm. A probable RNA-binding protein. This is RNA-binding protein KhpA from Mycobacterium bovis (strain ATCC BAA-935 / AF2122/97).